The sequence spans 658 residues: Trimethylamine N-oxide transport system permease protein TmoV (658 aa).

The next 15 membrane-spanning stretches (helical) occupy residues 20–40 (LGLAMIGLAVMMTLLHYAGLL), 103–123 (IGPIPWSAIAAMTAVVGYYLG), 127–147 (MALLAGGTFVWTAMIGQWDIA), 153–173 (VLVVAAPLAFAIGLVLGISAW), 185–205 (VLAVLQTLPFFTYLLPAVIFF), 212–232 (GAVATTVYAIPPMILMTTLGL), 273–293 (VIMLCLAMVVLTAFIGMPGLG), 300–320 (MGSFKIGRSFEIGVTIVLLAV), 349–369 (FLLMAIGAFVGFTLIAQVVPI), 420–440 (FMLSIPTVAFVLFISAAALLV), 447–467 (VLAAAFFGLVALTGWWDRSVI), 469–489 (LYSVLAAVSIALLLGVPIGVV), 517–537 (IPAIMLFGITATSVVMSILIF), 585–605 (AVGFNQAIMFAFFMVIIAAFI), and 627–647 (FVLGICVTLMALTFDMVIMKW). Residues 147 to 326 (AMQTMSVLVV…LLAVTLDRMS (180 aa)) enclose the ABC transmembrane type-1 1 domain. Positions 465-644 (SVITLYSVLA…LMALTFDMVI (180 aa)) constitute an ABC transmembrane type-1 2 domain.

It belongs to the binding-protein-dependent transport system permease family. In terms of assembly, the complex is probably composed of two ATP-binding proteins (TmoW), two transmembrane proteins (TmoV) and a solute-binding protein (TmoX).

Its subcellular location is the cell inner membrane. Functionally, part of the ABC transporter complex TmoXWV involved in trimethylamine N-oxide (TMAO) import. Responsible for the translocation of the substrate across the membrane. Is specific for TMAO and essential for TMAO metabolism. This chain is Trimethylamine N-oxide transport system permease protein TmoV, found in Ruegeria pomeroyi (strain ATCC 700808 / DSM 15171 / DSS-3) (Silicibacter pomeroyi).